The chain runs to 124 residues: Histone H2A (124 aa).

The segment covering 1-18 has biased composition (basic residues); that stretch reads MSGRGKGGKVKGKAKSRS. The interval 1-21 is disordered; sequence MSGRGKGGKVKGKAKSRSNRA. S2 is modified (N-acetylserine). The residue at position 2 (S2) is a Phosphoserine. An N6-succinyllysine modification is found at K36. N5-methylglutamine is present on Q104. A Glycyl lysine isopeptide (Lys-Gly) (interchain with G-Cter in ubiquitin) cross-link involves residue K119. T120 is modified (phosphothreonine).

The protein belongs to the histone H2A family. The nucleosome is a histone octamer containing two molecules each of H2A, H2B, H3 and H4 assembled in one H3-H4 heterotetramer and two H2A-H2B heterodimers. The octamer wraps approximately 147 bp of DNA. Post-translationally, the chromatin-associated form, but not the free cytoplasmic form, is phosphorylated on Thr-120 by NHK-1 during mitosis, and dephosphorylated during S-phase. Also phosphorylated on Thr-120 by NHK-1 during prophase I of meiosis; which is required for acetylation of H3 'Lys-14' and H4 'Lys-5', diassembly of the synaptonemal complex, and karyosome formation. Monoubiquitination of Lys-119 by sce/dRING gives a specific tag for epigenetic transcriptional repression. In terms of processing, phosphorylation on Ser-2 is enhanced during mitosis. Phosphorylation on Ser-2 directly represses transcription.

The protein resides in the nucleus. It localises to the chromosome. Core component of nucleosome. Nucleosomes wrap and compact DNA into chromatin, limiting DNA accessibility to the cellular machineries which require DNA as a template. Histones thereby play a central role in transcription regulation, DNA repair, DNA replication and chromosomal stability. DNA accessibility is regulated via a complex set of post-translational modifications of histones, also called histone code, and nucleosome remodeling. This chain is Histone H2A (His2A), found in Drosophila erecta (Fruit fly).